The chain runs to 585 residues: Glutamate decarboxylase 2 (585 aa).

Residues 1-14 (MASPGSGFWSFGSE) are compositionally biased toward low complexity. The tract at residues 1-24 (MASPGSGFWSFGSEDGSGDSENPG) is disordered. A phosphoserine mark is found at Ser-3, Ser-6, Ser-10, and Ser-13. S-palmitoyl cysteine attachment occurs at residues Cys-30 and Cys-45. Substrate is bound at residue 181–183 (QLS). Lys-396 is subject to N6-(pyridoxal phosphate)lysine. Residue Arg-558 coordinates substrate.

Belongs to the group II decarboxylase family. As to quaternary structure, homodimer. It depends on pyridoxal 5'-phosphate as a cofactor. In terms of processing, phosphorylated; which does not affect kinetic parameters or subcellular location. Post-translationally, palmitoylated; which is required for presynaptic clustering.

Its subcellular location is the cytoplasm. The protein resides in the cytosol. It localises to the cytoplasmic vesicle. It is found in the presynaptic cell membrane. The protein localises to the golgi apparatus membrane. It catalyses the reaction L-glutamate + H(+) = 4-aminobutanoate + CO2. Catalyzes the production of GABA. This is Glutamate decarboxylase 2 from Homo sapiens (Human).